The following is a 604-amino-acid chain: Nuclear cap-binding protein subunit 3 (604 aa).

The interval 1 to 36 is disordered; that stretch reads MAAVRGLRISVKAEATATTAEPRGPEPEPMEVEEGE. An RNA recognition motif (RRM) domain region spans residues 116–177; sequence DTIYICGVDE…MSSFPDQEKP (62 aa). Residues 145–148 carry the WLDD motif; essential for 7-methylguanosine-containing mRNA cap binding motif; the sequence is WLDD. Disordered stretches follow at residues 168 to 219, 319 to 383, and 457 to 604; these read MSSF…DIEL, KHRH…DSDE, and QNNN…DTES. The segment covering 173–198 has biased composition (basic and acidic residues); it reads DQEKPKGGENNEEKTAEKNKKEKQEE. Composition is skewed to acidic residues over residues 199–219 and 331–349; these read STDD…DIEL and EPIE…DEDD. Basic and acidic residues predominate over residues 350–370; it reads RVVVEYRDDLQPFKQSRDRGA. The segment covering 458–469 has biased composition (polar residues); it reads NNNGLRQPNSIV. 3 stretches are compositionally biased toward basic and acidic residues: residues 495–505, 539–548, and 569–582; these read PRREPISDVHS, TQEKTSDKPE, and IKEK…KSRL. Over residues 595-604 the composition is skewed to low complexity; it reads ESSSGSDTES.

The protein belongs to the NCBP3 family. In terms of assembly, component of an alternative cap-binding complex (CBC) composed of NCBP1/CBP80 and NCBP3.

The protein localises to the nucleus. It is found in the cytoplasm. Its function is as follows. Associates with NCBP1/CBP80 to form an alternative cap-binding complex (CBC) which plays a key role in mRNA export. NCBP3 serves as adapter protein linking the capped RNAs (m7GpppG-capped RNA) to NCBP1/CBP80. Unlike the conventional CBC with NCBP2 which binds both small nuclear RNA (snRNA) and messenger (mRNA) and is involved in their export from the nucleus, the alternative CBC with NCBP3 does not bind snRNA and associates only with mRNA thereby playing a role in only mRNA export. The sequence is that of Nuclear cap-binding protein subunit 3 from Gallus gallus (Chicken).